A 101-amino-acid chain; its full sequence is Phosphoribosyl-AMP cyclohydrolase (101 aa).

Asp-71 contacts Mg(2+). Zn(2+) is bound at residue Cys-72. Positions 73 and 75 each coordinate Mg(2+). 2 residues coordinate Zn(2+): Cys-88 and Cys-95.

The protein belongs to the PRA-CH family. Homodimer. The cofactor is Mg(2+). Requires Zn(2+) as cofactor.

It is found in the cytoplasm. The catalysed reaction is 1-(5-phospho-beta-D-ribosyl)-5'-AMP + H2O = 1-(5-phospho-beta-D-ribosyl)-5-[(5-phospho-beta-D-ribosylamino)methylideneamino]imidazole-4-carboxamide. The protein operates within amino-acid biosynthesis; L-histidine biosynthesis; L-histidine from 5-phospho-alpha-D-ribose 1-diphosphate: step 3/9. Functionally, catalyzes the hydrolysis of the adenine ring of phosphoribosyl-AMP. This chain is Phosphoribosyl-AMP cyclohydrolase, found in Bacillus cereus (strain ATCC 10987 / NRS 248).